Here is a 538-residue protein sequence, read N- to C-terminus: MSLSGSDSHLAVSPTLAEDMNSSDTSAGLAETPPADEEKRSIVDTGESVVAMNEPHIVDWDGPDDPGNPVNFSRHIKITNVGIVSALTFITPLASSMFAPGVPQLMEEFHSSSRLLAGFVVSVYVLGFAIGPLILAPASELLGRVPIYHICNICFTVFSIACALSTNLGMLIAFRFFQGCFGSAPVTNGGGTIADLIVQEKRGGVIAIYALGPLLGPVIGPVAGGYLAAARGWRWVFWVLAIVGGGCTLASFLFLRETYPMVLLKRKTQRLIQETGNTHLRSKNDNGMSTRQRFVQAIVRPSRILFRSPIVAASSVYVGIVYGYQYLMFSTFTYVFEDQYAFPTSSAGLTFLGTGVGSLLGLFVIGAVSDRILKAKSKPTPEAPSGAMKPEYRLPPLVWGAFFIPAGLFMYGWSAYYRTHWIVPIIGTGLVGIGNIAVFMCITSYLVDAFTIFAASALAANTVVRSILGALLPMAGQSMYDSMGLGWGNSLLGFIAVVCIPIPWAMMRYGERMREAFDGATIFTIFSGSVSVTRSTFT.

The interval 1–42 is disordered; it reads MSLSGSDSHLAVSPTLAEDMNSSDTSAGLAETPPADEEKRSI. Residues Asn-21 and Asn-71 are each glycosylated (N-linked (GlcNAc...) asparagine). 11 helical membrane-spanning segments follow: residues 81–101, 115–135, 153–173, 203–223, 235–255, 309–329, 348–368, 394–414, 422–442, 444–464, and 485–505; these read VGIV…FAPG, LLAG…PLIL, ICFT…MLIA, GGVI…GPVA, WVFW…FLFL, PIVA…YLMF, GLTF…IGAV, LPPL…YGWS, IVPI…FMCI, SYLV…NTVV, and LGWG…IPWA.

It belongs to the major facilitator superfamily.

The protein resides in the membrane. Functionally, MFS-type transporter; part of the gene cluster that mediates the biosynthesis of talaronoid C, a fusicoccane diterpenoid with an unprecedented tricyclic 5/8/6 ring system. The sequence is that of MFS-type transporter tndD from Aspergillus flavipes.